Consider the following 610-residue polypeptide: MTQIFDSVSFLKTVTHQPGVYRMYNAEAVVIYVGKAKDLKKRLSSYFRKKVDSEKTKALVSNIAKIDVTVTHTETEALILEHNYIKQYLPKYNVLLRDDKSYPYIFLSAHRHPRVSLHRGAKKRKGEYFGPYPDSGAVRETLHLIQKIFPVRQCEDTVYANRTRPCLMYQIGRCAGPCVSSVISDVDYAELVGYLRLFLQGKDNQVLELLVQKMEIASQQLKFEDAAKFRDQIQAIRRVQEQQYVSEDSQEDMDVLGFAQENGIACIHILMIRQGKVLGSRSHFPKIPQNTNAQEVFDSFLTQYYLSHNEARTIPSRIILNQELAADVEAIQLALSDVAGRKVQFHTSPSGSRGRYLKLSNTNALTAMTTKINHKMTINQRFKALRDVLAMDSIARMECFDISHTMGESTIASCVVFNSEGPVKQEYRRYNITGITGGDDYAAMGQALERRYAKQLDVEKIPDIIFIDGGKGQLNRAHEIIVQYWGDWPKRPVMIGIAKGVTRKPGLETLITVDGDEFHLPSDDPALHLIQHIRDESHNHAIAGHRAKRGKTRKTSALEGIEGVGPKRRQALLKYTGGLQELKRASVEEIAKVPGISHSLAEIIYQALKQ.

In terms of domain architecture, GIY-YIG spans 16-94 (HQPGVYRMYN…IKQYLPKYNV (79 aa)). Residues 204-239 (NQVLELLVQKMEIASQQLKFEDAAKFRDQIQAIRRV) enclose the UVR domain.

Belongs to the UvrC family. Interacts with UvrB in an incision complex.

It is found in the cytoplasm. Functionally, the UvrABC repair system catalyzes the recognition and processing of DNA lesions. UvrC both incises the 5' and 3' sides of the lesion. The N-terminal half is responsible for the 3' incision and the C-terminal half is responsible for the 5' incision. This chain is UvrABC system protein C, found in Vibrio vulnificus (strain CMCP6).